A 367-amino-acid chain; its full sequence is Inner membrane amino-acid ABC transporter permease protein YhdY (367 aa).

Residues 1–36 (MTKVLLSHPPRPASHNSSRAMVWVRKNLFSSWSNSL) lie on the Cytoplasmic side of the membrane. The helical transmembrane segment at 37–57 (LTIGCIWLMWELIPPLLNWAF) threads the bilayer. The Periplasmic segment spans residues 58–99 (LQANWVGSTRADCTKAGACWVFIHERFGQFMYGLYPHDQRWR). A helical transmembrane segment spans residues 100–120 (INLALLIGLVSIAPMFWKILP). The Cytoplasmic portion of the chain corresponds to 121-125 (HRGRY). Residues 126-146 (IAAWAVIYPLIVWWLMYGGFF) traverse the membrane as a helical segment. The Periplasmic segment spans residues 147 to 162 (ALERVETRQWGGLTLT). In terms of domain architecture, ABC transmembrane type-1 spans 159-353 (LTLTLIIASV…IFCFSMSRYS (195 aa)). Residues 163–183 (LIIASVGIAGALPWGILLALG) form a helical membrane-spanning segment. The Cytoplasmic portion of the chain corresponds to 184–192 (RRSHMPIVR). A helical transmembrane segment spans residues 193–213 (ILSVIFIEFWRGVPLITVLFM). Over 214-233 (SSVMLPLFMAEGTSIDKLIR) the chain is Periplasmic. Residues 234–254 (ALVGVILFQSAYVAEVVRGGL) form a helical membrane-spanning segment. Residues 255–291 (QALPKGQYEAAESLALGYWKTQGLVILPQALKLVIPG) are Cytoplasmic-facing. The chain crosses the membrane as a helical span at residues 292 to 312 (LVNTIIALFKDTSLVIIIGLF). The Periplasmic portion of the chain corresponds to 313–326 (DLFSSVQQATVDPA). The helical transmembrane segment at 327–347 (WLGMSTEGYVFAALIYWIFCF) threads the bilayer. Residues 348 to 367 (SMSRYSQYLEKRFNTGRTPH) are Cytoplasmic-facing.

Belongs to the binding-protein-dependent transport system permease family. HisMQ subfamily.

The protein localises to the cell inner membrane. Probably part of the binding-protein-dependent transport system YdhWXYZ for an amino acid; probably responsible for the translocation of the substrate across the membrane. This is Inner membrane amino-acid ABC transporter permease protein YhdY (yhdY) from Escherichia coli (strain K12).